Reading from the N-terminus, the 289-residue chain is NAC domain-containing protein 2 (289 aa).

Residues 7–158 (LPPGFRFHPT…DWVLCRIYNK (152 aa)) form the NAC domain.

As to quaternary structure, interacts with KIN10 and KIN11.

It is found in the nucleus. The polypeptide is NAC domain-containing protein 2 (NAC002) (Arabidopsis thaliana (Mouse-ear cress)).